The primary structure comprises 147 residues: Hemoglobin subunit gamma (147 aa).

The region spanning 3-147 (NFTAEDKAAI…VASALASRYH (145 aa)) is the Globin domain. The heme b site is built by His64 and His93.

The protein belongs to the globin family. In terms of assembly, heterotetramer of two alpha chains and two gamma chains in fetal hemoglobin (Hb F). As to expression, red blood cells.

Functionally, gamma chains make up the fetal hemoglobin F, in combination with alpha chains. This is Hemoglobin subunit gamma (HBG) from Alouatta belzebul (Red-handed howler monkey).